The chain runs to 53 residues: Photosystem II reaction center protein K (53 aa).

A propeptide spanning residues 1-16 (MLKFYLENVFHLIFFA) is cleaved from the precursor. The chain crosses the membrane as a helical span at residues 28 to 48 (IVNVMPIIPLFFFLLAFVWQA).

Belongs to the PsbK family. As to quaternary structure, PSII is composed of 1 copy each of membrane proteins PsbA, PsbB, PsbC, PsbD, PsbE, PsbF, PsbH, PsbI, PsbJ, PsbK, PsbL, PsbM, PsbT, PsbX, PsbY, PsbZ, Psb30/Ycf12, at least 3 peripheral proteins of the oxygen-evolving complex and a large number of cofactors. It forms dimeric complexes.

It localises to the plastid. It is found in the chloroplast thylakoid membrane. One of the components of the core complex of photosystem II (PSII). PSII is a light-driven water:plastoquinone oxidoreductase that uses light energy to abstract electrons from H(2)O, generating O(2) and a proton gradient subsequently used for ATP formation. It consists of a core antenna complex that captures photons, and an electron transfer chain that converts photonic excitation into a charge separation. This Huperzia lucidula (Shining clubmoss) protein is Photosystem II reaction center protein K.